Here is a 608-residue protein sequence, read N- to C-terminus: Developmental regulatory protein wetA (608 aa).

7 disordered regions span residues 54–88 (ADHH…GVST), 102–125 (VDAT…VDPR), 146–186 (VSMS…MTRK), 202–226 (SKLR…NPPR), 309–352 (WPHQ…HAVP), 447–544 (AQTY…GDIG), and 556–576 (LMTG…EREA). 3 stretches are compositionally biased toward low complexity: residues 77–88 (ESTASASSGVST), 107–119 (PSQP…PGAS), and 163–175 (SSPG…SQPS). Positions 313–338 (QHPHPHPHPHHPQAHTHPHPHPHPHP) are enriched in basic residues. Composition is skewed to low complexity over residues 339–350 (HQQAVAGHPQHA) and 502–517 (SSNG…SGRG).

The protein belongs to the wetA family.

In terms of biological role, abaA and wetA are pivotal regulators of conidiophore development and conidium maturation. They act individually and together to regulate their own expression and that of numerous other sporulation-specific genes. Functions to maintain conidial dormancy by suppressing microcycle conidiation. This Gibberella zeae (strain ATCC MYA-4620 / CBS 123657 / FGSC 9075 / NRRL 31084 / PH-1) (Wheat head blight fungus) protein is Developmental regulatory protein wetA.